We begin with the raw amino-acid sequence, 341 residues long: GTP 3',8-cyclase (341 aa).

A Radical SAM core domain is found at 11–231 (KRERPLRDLR…DLINQHMPTE (221 aa)). GTP is bound at residue Arg20. The [4Fe-4S] cluster site is built by Cys27 and Cys31. Tyr33 provides a ligand contact to S-adenosyl-L-methionine. Cys34 contacts [4Fe-4S] cluster. Arg75 lines the GTP pocket. Position 79 (Gly79) interacts with S-adenosyl-L-methionine. GTP is bound at residue Thr106. Ser130 is a binding site for S-adenosyl-L-methionine. Lys167 is a GTP binding site. Residue Met201 participates in S-adenosyl-L-methionine binding. [4Fe-4S] cluster-binding residues include Cys265 and Cys268. 270–272 (RAR) lines the GTP pocket. Cys282 contacts [4Fe-4S] cluster.

Belongs to the radical SAM superfamily. MoaA family. As to quaternary structure, monomer and homodimer. [4Fe-4S] cluster serves as cofactor.

The enzyme catalyses GTP + AH2 + S-adenosyl-L-methionine = (8S)-3',8-cyclo-7,8-dihydroguanosine 5'-triphosphate + 5'-deoxyadenosine + L-methionine + A + H(+). The protein operates within cofactor biosynthesis; molybdopterin biosynthesis. In terms of biological role, catalyzes the cyclization of GTP to (8S)-3',8-cyclo-7,8-dihydroguanosine 5'-triphosphate. This chain is GTP 3',8-cyclase, found in Bacillus velezensis (strain DSM 23117 / BGSC 10A6 / LMG 26770 / FZB42) (Bacillus amyloliquefaciens subsp. plantarum).